The primary structure comprises 264 residues: Small ribosomal subunit protein uS3 (264 aa).

The KH type-2 domain maps to 39 to 107; it reads VREYLKKKLK…PVHVNIEEIR (69 aa). A disordered region spans residues 217–264; sequence EEVAEEKRPRRNARPGDRRPRRDGEGAPAGARRGAPRRGGAGDGKTGE. The segment covering 230-241 has biased composition (basic and acidic residues); the sequence is RPGDRRPRRDGE. Over residues 253 to 264 the composition is skewed to gly residues; it reads RRGGAGDGKTGE.

Belongs to the universal ribosomal protein uS3 family. Part of the 30S ribosomal subunit. Forms a tight complex with proteins S10 and S14.

In terms of biological role, binds the lower part of the 30S subunit head. Binds mRNA in the 70S ribosome, positioning it for translation. This chain is Small ribosomal subunit protein uS3, found in Paraburkholderia phymatum (strain DSM 17167 / CIP 108236 / LMG 21445 / STM815) (Burkholderia phymatum).